We begin with the raw amino-acid sequence, 348 residues long: Hereditary hemochromatosis protein homolog (348 aa).

A signal peptide spans 1-22 (MGPRARPALFFLILLRTVAAQG). Residues 23-114 (RPPRSHSLRY…IMDNHNHSKE (92 aa)) form an alpha-1 region. Topologically, residues 23–306 (RPPRSHSLRY…WEPSLSNTLV (284 aa)) are extracellular. N-linked (GlcNAc...) asparagine glycosylation is found at Asn110, Asn130, and Asn234. The tract at residues 115–205 (SHTLQVILGC…ELGRGVLDQQ (91 aa)) is alpha-2. 2 cysteine pairs are disulfide-bonded: Cys124-Cys187 and Cys225-Cys282. The tract at residues 206–297 (VPPLVKVTHH…GLDQPLTATW (92 aa)) is alpha-3. The Ig-like C1-type domain occupies 207–296 (PPLVKVTHHV…PGLDQPLTAT (90 aa)). The segment at 298 to 306 (EPSLSNTLV) is connecting peptide. The chain crosses the membrane as a helical span at residues 307-330 (TGVISGIAVCVIIFLIGILFRILR). Residues 331–348 (KRQASRGAMGDYVLAECE) lie on the Cytoplasmic side of the membrane.

The protein belongs to the MHC class I family. In terms of assembly, binds TFR through the extracellular domain in a pH-dependent manner.

It localises to the cell membrane. Its function is as follows. Binds to transferrin receptor (TFR) and reduces its affinity for iron-loaded transferrin. This chain is Hereditary hemochromatosis protein homolog (HFE), found in Rhinoceros unicornis (Greater Indian rhinoceros).